The sequence spans 325 residues: RepFIB replication protein A (325 aa).

Positions 279–298 are disordered; the sequence is APNDESKENPLPPSPAEKVS.

The protein belongs to the initiator RepB protein family.

Functionally, this protein is essential for plasmid replication; it is involved in copy control functions. In vitro, binds to the DNA repeat units, BCDD'D'', EFG and HIJ. This is RepFIB replication protein A (repB) from Escherichia coli (strain K12).